A 352-amino-acid chain; its full sequence is D-alanine--D-alanine ligase (352 aa).

The region spanning 135 to 344 (KTVFAKAGLP…FPQLVDRLIE (210 aa)) is the ATP-grasp domain. 171–226 (EETLNYPCFVKPANLGSSVGIAKVRSRSELEKALDQAASYDRRIIVEAGVIAREVE) serves as a coordination point for ATP. Mg(2+)-binding residues include Asp-297, Glu-311, and Asn-313.

This sequence belongs to the D-alanine--D-alanine ligase family. It depends on Mg(2+) as a cofactor. Requires Mn(2+) as cofactor.

The protein resides in the cytoplasm. The enzyme catalyses 2 D-alanine + ATP = D-alanyl-D-alanine + ADP + phosphate + H(+). It functions in the pathway cell wall biogenesis; peptidoglycan biosynthesis. Its function is as follows. Cell wall formation. This chain is D-alanine--D-alanine ligase, found in Gloeothece citriformis (strain PCC 7424) (Cyanothece sp. (strain PCC 7424)).